Here is a 66-residue protein sequence, read N- to C-terminus: Large ribosomal subunit protein uL30 (66 aa).

It belongs to the universal ribosomal protein uL30 family. In terms of assembly, part of the 50S ribosomal subunit.

This chain is Large ribosomal subunit protein uL30, found in Brucella anthropi (strain ATCC 49188 / DSM 6882 / CCUG 24695 / JCM 21032 / LMG 3331 / NBRC 15819 / NCTC 12168 / Alc 37) (Ochrobactrum anthropi).